Here is an 873-residue protein sequence, read N- to C-terminus: Valine--tRNA ligase (873 aa).

Positions 46-56 match the 'HIGH' region motif; the sequence is PNVTGKLHIGH. A 'KMSKS' region motif is present at residues 525 to 529; it reads KMSKS. ATP is bound at residue Lys-528. A coiled-coil region spans residues 804–873; it reads NDDFIDKEKM…ELIQDKLNKM (70 aa).

This sequence belongs to the class-I aminoacyl-tRNA synthetase family. ValS type 1 subfamily. As to quaternary structure, monomer.

It localises to the cytoplasm. The enzyme catalyses tRNA(Val) + L-valine + ATP = L-valyl-tRNA(Val) + AMP + diphosphate. Functionally, catalyzes the attachment of valine to tRNA(Val). As ValRS can inadvertently accommodate and process structurally similar amino acids such as threonine, to avoid such errors, it has a 'posttransfer' editing activity that hydrolyzes mischarged Thr-tRNA(Val) in a tRNA-dependent manner. The polypeptide is Valine--tRNA ligase (Mesoplasma florum (strain ATCC 33453 / NBRC 100688 / NCTC 11704 / L1) (Acholeplasma florum)).